A 683-amino-acid chain; its full sequence is Dipeptidyl-peptidase 5 (683 aa).

An N-terminal signal peptide occupies residues 1–19; it reads MHSLFKQLVFFLVMTLTAA. N-linked (GlcNAc...) asparagine glycans are attached at residues Asn-53, Asn-69, Asn-103, Asn-116, Asn-126, and Asn-400. Active-site charge relay system residues include Ser-535, Asp-617, and His-649.

It belongs to the peptidase S9C family.

The protein resides in the secreted. Its subcellular location is the cytoplasm. It localises to the nucleus. The sequence is that of Dipeptidyl-peptidase 5 from Schizosaccharomyces pombe (strain 972 / ATCC 24843) (Fission yeast).